The following is a 323-amino-acid chain: MAAAAAANGTGGSSGMEVDAAVVPSVMASGVTGSVSVALHPLVILNISDHWIRMRSQEGRPMQVIGALIGKQEGRNIEVMNSFELLSHTVEEKIIIDKEYYYTKEEQFKQVFKELEFLGWYTTGGPPDPSDIHVHKQVCEIIESPLFLKLNPMTKHTDLPVSVFESVIDIINGEATMLFAELTYTLATEEAERIGVDHVARMTATGSGENSTVAEHLIAQHSAIKMLHSRVKLILEYVKASEAGEVPFNHEILREAYALCHCLPVLSTDKFKTDFYDQCNDVGLMAYLGTITKTCNTMNQFVNKFNVLYDRQGIGRRMRGLFF.

An MPN domain is found at valine 37–isoleucine 170.

Belongs to the peptidase M67A family. CSN6 subfamily. In terms of assembly, component of the CSN complex, composed of COPS1/GPS1, COPS2, COPS3, COPS4, COPS5, COPS6, COPS7 (COPS7A or COPS7B), COPS8 and COPS9. In the complex, it probably interacts directly with COPS2, COPS4, COPS5, COPS7 (COPS7A or COPS7B) and COPS9. Interacts with the translation initiation factor EIF3S6. Interacts weakly with RBX1. Directly interacts with COP1 and 14-3-3 protein sigma/SFN. Interacts with ERCC6.

Its subcellular location is the cytoplasm. The protein resides in the nucleus. In terms of biological role, component of the COP9 signalosome complex (CSN), a complex involved in various cellular and developmental processes. The CSN complex is an essential regulator of the ubiquitin (Ubl) conjugation pathway by mediating the deneddylation of the cullin subunits of SCF-type E3 ligase complexes, leading to decrease the Ubl ligase activity of SCF-type complexes such as SCF, CSA or DDB2. The complex is also involved in phosphorylation of p53/TP53, c-jun/JUN, IkappaBalpha/NFKBIA, ITPK1 and IRF8, possibly via its association with CK2 and PKD kinases. CSN-dependent phosphorylation of TP53 and JUN promotes and protects degradation by the Ubl system, respectively. Has some glucocorticoid receptor-responsive activity. Stabilizes COP1 through reducing COP1 auto-ubiquitination and decelerating COP1 turnover rate, hence regulates the ubiquitination of COP1 targets, including SFN. The protein is COP9 signalosome complex subunit 6 (COPS6) of Sus scrofa (Pig).